A 206-amino-acid polypeptide reads, in one-letter code: Threonine efflux protein (206 aa).

The chain crosses the membrane as a helical span at residues 1 to 21 (MMMLFFTVAMVHIVALMSPGP). Topologically, residues 22 to 43 (DFFFVSQTAVSRSRKEAMMGVL) are periplasmic. Residues 44–64 (GITCGVMVWAGVALLGLHLII) traverse the membrane as a helical segment. Residues 65–66 (EK) are Cytoplasmic-facing. A helical membrane pass occupies residues 67-87 (MAWLHTIIMVGGGLYLCWMGY). Residues 88 to 149 (QMLRGALKKQ…VGDNVGAAAR (62 aa)) lie on the Periplasmic side of the membrane. A helical transmembrane segment spans residues 150-173 (WGIFALITLETLAWFTVVASLFAL). Over 174–206 (PKMRRGYQRLAKWIDGFAGALFAGFGIHLIISR) the chain is Cytoplasmic.

This sequence belongs to the Rht family.

It is found in the cell inner membrane. In terms of biological role, conducts the efflux of threonine. This chain is Threonine efflux protein (rhtC), found in Salmonella typhimurium (strain LT2 / SGSC1412 / ATCC 700720).